The following is a 151-amino-acid chain: 3-dehydroquinate dehydratase (151 aa).

Tyr-26 acts as the Proton acceptor in catalysis. The substrate site is built by Asn-77, His-83, and Asp-90. His-103 functions as the Proton donor in the catalytic mechanism. Substrate-binding positions include Leu-104–Ser-105 and Arg-114.

It belongs to the type-II 3-dehydroquinase family. In terms of assembly, homododecamer.

It catalyses the reaction 3-dehydroquinate = 3-dehydroshikimate + H2O. The protein operates within metabolic intermediate biosynthesis; chorismate biosynthesis; chorismate from D-erythrose 4-phosphate and phosphoenolpyruvate: step 3/7. Functionally, catalyzes a trans-dehydration via an enolate intermediate. The polypeptide is 3-dehydroquinate dehydratase (Pelodictyon phaeoclathratiforme (strain DSM 5477 / BU-1)).